We begin with the raw amino-acid sequence, 399 residues long: Myb-related transcription factor, partner of profilin (399 aa).

Residues 12–84 enclose the Myb-like domain; that stretch reads TTRLRKPRFS…EVQKRWNDFK (73 aa). A Nuclear localization signal motif is present at residues 83–86; the sequence is FKRR. Disordered stretches follow at residues 87–108, 127–261, 297–332, and 358–399; these read TKEKLARVPHSTQGAGPAAEDA, PGAG…PSLD, LLPGTPVDSLPPPLPPPPPPPPPPRPVLPPPAPKVE, and APRS…WKSP. A compositionally biased stretch (low complexity) spans 127–136; it reads PGAGAGAEEP. Residues 137 to 149 show a composition bias toward pro residues; sequence PAAPSSQPPPPSA. Residues 156 to 170 are compositionally biased toward basic and acidic residues; that stretch reads LSEDRREDRRADTSA. 3 stretches are compositionally biased toward pro residues: residues 219–252, 305–329, and 366–377; these read SPPPPAPPLPPPPPLAQVAPSPPSPPPPPRPPPT, SLPPPLPPPPPPPPPPRPVLPPPAP, and PRPPPAPLPPHD. Positions 381–399 are enriched in basic residues; it reads HKRRKGFPTRKRRGRWKSP. Short sequence motifs (nuclear localization signal) lie at residues 382–385 and 390–393; these read KRRK and RKRR.

In terms of assembly, interacts with PFN1. Homodimer and heterodimer with PFN1.

Its subcellular location is the nucleus. In terms of biological role, transcriptional repressor; DNA-binding protein that specifically recognizes the core sequence 5'-YAAC[GT]G-3'. Dimerization with PFN1 reduces its DNA-binding capacity. This is Myb-related transcription factor, partner of profilin (MYPOP) from Homo sapiens (Human).